A 284-amino-acid chain; its full sequence is MRKRIWVGLPLALVFGGIFAFHTVFHIPEQPEMTTISDGSFNQQLHCYESSTRASIDQEGRLNLLVWNIYKQNRANWQSVLTQMSAGAQLILLQEASLEDGLKRWIASGGWSGEQVNAFKAFDKAAGVLTLGWRKPRLACGYTQLEPWIRLPKSGLYSEYPLSDGQMLIVVNLHAVNFTWGVQEYQQQVNDLIAALKEHPGPAIVAGDFNTWSEKRLQAVTERLENAGLIEVVFSPDQRTRFITGLPLDHVFYKGLEVQKAEAPQTDASDHNPLLVSFTLPTDK.

The protein belongs to the UPF0294 family.

The protein localises to the cytoplasm. In Vibrio vulnificus (strain YJ016), this protein is UPF0294 protein VV2535.